Consider the following 107-residue polypeptide: Nucleoid-associated protein R00231 (107 aa).

Belongs to the YbaB/EbfC family. As to quaternary structure, homodimer.

The protein localises to the cytoplasm. It localises to the nucleoid. In terms of biological role, binds to DNA and alters its conformation. May be involved in regulation of gene expression, nucleoid organization and DNA protection. The sequence is that of Nucleoid-associated protein R00231 from Rhizobium meliloti (strain 1021) (Ensifer meliloti).